Here is a 1049-residue protein sequence, read N- to C-terminus: Carbamoyl phosphate synthase large chain (1049 aa).

Positions M1–D399 are carboxyphosphate synthetic domain. ATP-binding residues include R127, R167, G173, G174, K206, L208, E213, G239, V240, H241, Q282, and E296. The ATP-grasp 1 domain maps to R131–L325. 3 residues coordinate Mg(2+): Q282, E296, and N298. Residues Q282, E296, and N298 each coordinate Mn(2+). Positions I400–I548 are oligomerization domain. A carbamoyl phosphate synthetic domain region spans residues E549–N930. One can recognise an ATP-grasp 2 domain in the interval S674–L864. ATP contacts are provided by R710, K749, L751, E756, G780, V781, H782, S783, Q823, and E835. Residues Q823, E835, and N837 each coordinate Mg(2+). Residues Q823, E835, and N837 each coordinate Mn(2+). Residues N930–I1049 form the MGS-like domain. The tract at residues K931–I1049 is allosteric domain.

This sequence belongs to the CarB family. In terms of assembly, composed of two chains; the small (or glutamine) chain promotes the hydrolysis of glutamine to ammonia, which is used by the large (or ammonia) chain to synthesize carbamoyl phosphate. Tetramer of heterodimers (alpha,beta)4. The cofactor is Mg(2+). Requires Mn(2+) as cofactor.

It catalyses the reaction hydrogencarbonate + L-glutamine + 2 ATP + H2O = carbamoyl phosphate + L-glutamate + 2 ADP + phosphate + 2 H(+). The enzyme catalyses hydrogencarbonate + NH4(+) + 2 ATP = carbamoyl phosphate + 2 ADP + phosphate + 2 H(+). It functions in the pathway amino-acid biosynthesis; L-arginine biosynthesis; carbamoyl phosphate from bicarbonate: step 1/1. The protein operates within pyrimidine metabolism; UMP biosynthesis via de novo pathway; (S)-dihydroorotate from bicarbonate: step 1/3. Functionally, large subunit of the glutamine-dependent carbamoyl phosphate synthetase (CPSase). CPSase catalyzes the formation of carbamoyl phosphate from the ammonia moiety of glutamine, carbonate, and phosphate donated by ATP, constituting the first step of 2 biosynthetic pathways, one leading to arginine and/or urea and the other to pyrimidine nucleotides. The large subunit (synthetase) binds the substrates ammonia (free or transferred from glutamine from the small subunit), hydrogencarbonate and ATP and carries out an ATP-coupled ligase reaction, activating hydrogencarbonate by forming carboxy phosphate which reacts with ammonia to form carbamoyl phosphate. The chain is Carbamoyl phosphate synthase large chain from Sulfurisphaera tokodaii (strain DSM 16993 / JCM 10545 / NBRC 100140 / 7) (Sulfolobus tokodaii).